The sequence spans 29 residues: Glucagon (29 aa).

A Phosphoserine modification is found at Ser2.

The protein belongs to the glucagon family.

It is found in the secreted. Functionally, glucagon plays a key role in glucose metabolism and homeostasis. Regulates blood glucose by increasing gluconeogenesis and decreasing glycolysis. The polypeptide is Glucagon (GCG) (Chinchilla chinchilla (Short-tailed chinchilla)).